A 648-amino-acid polypeptide reads, in one-letter code: Threonine--tRNA ligase (648 aa).

Residues 1-61 (MITITFPDGA…EEDGSIEIIT (61 aa)) enclose the TGS domain. The interval 242–540 (DHRKLGKELD…LIETYKGAFP (299 aa)) is catalytic. Zn(2+) is bound by residues Cys336, His387, and His517.

Belongs to the class-II aminoacyl-tRNA synthetase family. In terms of assembly, homodimer. The cofactor is Zn(2+).

The protein localises to the cytoplasm. It carries out the reaction tRNA(Thr) + L-threonine + ATP = L-threonyl-tRNA(Thr) + AMP + diphosphate + H(+). Catalyzes the attachment of threonine to tRNA(Thr) in a two-step reaction: L-threonine is first activated by ATP to form Thr-AMP and then transferred to the acceptor end of tRNA(Thr). Also edits incorrectly charged L-seryl-tRNA(Thr). The polypeptide is Threonine--tRNA ligase (Streptococcus equi subsp. zooepidemicus (strain H70)).